The chain runs to 1171 residues: ATP-dependent helicase/deoxyribonuclease subunit B (1171 aa).

Belongs to the helicase family. AddB/RexB type 2 subfamily. Heterodimer of AddA and RexB. Mg(2+) is required as a cofactor.

Its function is as follows. The heterodimer acts as both an ATP-dependent DNA helicase and an ATP-dependent, dual-direction single-stranded exonuclease. Recognizes the chi site generating a DNA molecule suitable for the initiation of homologous recombination. This subunit has 5' -&gt; 3' nuclease activity but not helicase activity. This is ATP-dependent helicase/deoxyribonuclease subunit B from Leuconostoc citreum (strain KM20).